Consider the following 186-residue polypeptide: Ribosome-recycling factor (186 aa).

It belongs to the RRF family.

The protein resides in the cytoplasm. In terms of biological role, responsible for the release of ribosomes from messenger RNA at the termination of protein biosynthesis. May increase the efficiency of translation by recycling ribosomes from one round of translation to another. This Burkholderia ambifaria (strain ATCC BAA-244 / DSM 16087 / CCUG 44356 / LMG 19182 / AMMD) (Burkholderia cepacia (strain AMMD)) protein is Ribosome-recycling factor.